The primary structure comprises 338 residues: tRNA N6-adenosine threonylcarbamoyltransferase (338 aa).

Residues His112 and His116 each coordinate Fe cation. Residues 135 to 139, Asp168, Gly181, and Asn273 contribute to the substrate site; that span reads LVSGG. Asp301 is a binding site for Fe cation.

It belongs to the KAE1 / TsaD family. Fe(2+) is required as a cofactor.

It localises to the cytoplasm. It catalyses the reaction L-threonylcarbamoyladenylate + adenosine(37) in tRNA = N(6)-L-threonylcarbamoyladenosine(37) in tRNA + AMP + H(+). Functionally, required for the formation of a threonylcarbamoyl group on adenosine at position 37 (t(6)A37) in tRNAs that read codons beginning with adenine. Is involved in the transfer of the threonylcarbamoyl moiety of threonylcarbamoyl-AMP (TC-AMP) to the N6 group of A37, together with TsaE and TsaB. TsaD likely plays a direct catalytic role in this reaction. The polypeptide is tRNA N6-adenosine threonylcarbamoyltransferase (Buchnera aphidicola subsp. Baizongia pistaciae (strain Bp)).